A 976-amino-acid chain; its full sequence is Chitin synthase 3A (976 aa).

Residues aspartate 29–leucine 72 form a disordered region. A compositionally biased stretch (polar residues) spans alanine 31 to serine 40. Asparagine 32, asparagine 66, asparagine 95, and asparagine 602 each carry an N-linked (GlcNAc...) asparagine glycan. Transmembrane regions (helical) follow at residues leucine 639 to isoleucine 659, isoleucine 684 to alanine 704, valine 717 to leucine 737, leucine 773 to leucine 793, serine 801 to phenylalanine 821, threonine 903 to aspartate 923, and phenylalanine 944 to isoleucine 964.

The protein belongs to the chitin synthase family. Class III subfamily.

The protein resides in the cell membrane. The enzyme catalyses [(1-&gt;4)-N-acetyl-beta-D-glucosaminyl](n) + UDP-N-acetyl-alpha-D-glucosamine = [(1-&gt;4)-N-acetyl-beta-D-glucosaminyl](n+1) + UDP + H(+). Functionally, polymerizes chitin, a structural polymer of the cell wall and septum, by transferring the sugar moiety of UDP-GlcNAc to the non-reducing end of the growing chitin polymer. Shows additive effects in septum formation with CHS1, CHS2, CHS4, CHS5, CHS6 and CHS7. Involved in virulence and mediates mycotoxin deoxinivalenol (DON) biosynthesis via the regulation of the expression of TRI4, TRI5 and TRI6. This chain is Chitin synthase 3A, found in Gibberella zeae (strain ATCC MYA-4620 / CBS 123657 / FGSC 9075 / NRRL 31084 / PH-1) (Wheat head blight fungus).